The following is a 339-amino-acid chain: HTH-type transcriptional regulator SyrM 2 (339 aa).

One can recognise an HTH lysR-type domain in the interval 32–89 (VDLNLLVELEALLQYRNITHAAQHVGRSQPAMSRALSRLRDMFNDDLLVRGSSGLVPT). Positions 49–68 (ITHAAQHVGRSQPAMSRALS) form a DNA-binding region, H-T-H motif.

It belongs to the LysR transcriptional regulatory family.

Its function is as follows. Acts in trans to stimulate nod gene expression. The protein is HTH-type transcriptional regulator SyrM 2 (syrM2) of Sinorhizobium fredii (strain NBRC 101917 / NGR234).